The primary structure comprises 6907 residues: Fibrous sheath-interacting protein 2 (6907 aa).

The interval 273–292 (EERIEEQQHRNREESDRKKQ) is disordered. Ser430 bears the Phosphoserine mark. Disordered stretches follow at residues 439 to 472 (SQAF…ESGP), 954 to 990 (FQKS…RPFP), 1545 to 1573 (VQED…TKEM), 3202 to 3257 (VSSD…FDQT), 5650 to 5672 (RTSS…EHHS), 5725 to 5781 (SAQS…KPGI), 5850 to 5880 (DKGN…EAPS), and 6852 to 6874 (GSAN…KQGS). Positions 445-460 (PSKEEKETNADWDGRP) are enriched in basic and acidic residues. Residues 954 to 966 (FQKSRQPRISSPS) are compositionally biased toward polar residues. Composition is skewed to basic and acidic residues over residues 1545 to 1555 (VQEDNKEETKS) and 3213 to 3229 (SVED…RPDS). The segment covering 5728–5741 (SVTTKKVSSSTNKN) has biased composition (low complexity). Residues 5738 to 5766 (TNKNISAKEKEEEEREKEKVREEIKSEPS) adopt a coiled-coil conformation. Over residues 5743–5778 (SAKEKEEEEREKEKVREEIKSEPSKPDDPQNQRESK) the composition is skewed to basic and acidic residues.

In terms of assembly, may interact with AKAP4. Predominantly expressed in testis.

In terms of biological role, plays a role in spermatogenesis. The protein is Fibrous sheath-interacting protein 2 (FSIP2) of Homo sapiens (Human).